Consider the following 760-residue polypeptide: General transcription and DNA repair factor IIH helicase subunit XPD (760 aa).

Residues 7–283 (GLLVYFPYDY…KETDEQRLRD (277 aa)) enclose the Helicase ATP-binding domain. 42-49 (MPSGTGKT) contacts ATP. Cys116, Cys134, Cys155, and Cys190 together coordinate [4Fe-4S] cluster. A DEAH box motif is present at residues 234–237 (DEAH). Positions 438–637 (MDASLAIKPV…TQSRILKARL (200 aa)) are mediates interaction with MMS19. Residues 682–695 (KRFARADKRGKLPR) carry the Nuclear localization signal motif.

Belongs to the helicase family. RAD3/XPD subfamily. As to quaternary structure, component of the 7-subunit TFIIH core complex composed of XPB/ERCC3, XPD/ERCC2, GTF2H1, GTF2H2, GTF2H3, GTF2H4 and GTF2H5, which is active in NER. The core complex associates with the 3-subunit CDK-activating kinase (CAK) module composed of CCNH/cyclin H, CDK7 and MNAT1 to form the 10-subunit holoenzyme (holo-TFIIH) active in transcription. The interaction with GTF2H2 results in the stimulation of the 5'--&gt;3' helicase activity. Component of the MMXD complex, which includes CIAO1, ERCC2, CIAO2B, MMS19 and SLC25A5. Interacts with CIAO1 and CIAO2B; the interaction WITH CIAO2B is direct. Interacts with ATF7IP. Interacts directly with MMS19. Part of TBP-based Pol II pre-initiation complex (PIC), in which Pol II core assembles with general transcription factors and other specific initiation factors including GTF2E1, GTF2E2, GTF2F1, GTF2F2, TCEA1, ERCC2, ERCC3, GTF2H2, GTF2H3, GTF2H4, GTF2H5, GTF2A1, GTF2A2, GTF2B and TBP; this large multi-subunit PIC complex mediates DNA unwinding and targets Pol II core to the transcription start site where the first phosphodiester bond forms. Mg(2+) serves as cofactor. The cofactor is [4Fe-4S] cluster. In terms of processing, ISGylated.

The protein localises to the nucleus. It is found in the cytoplasm. The protein resides in the cytoskeleton. Its subcellular location is the spindle. It carries out the reaction Couples ATP hydrolysis with the unwinding of duplex DNA at the replication fork by translocating in the 5'-3' direction. This creates two antiparallel DNA single strands (ssDNA). The leading ssDNA polymer is the template for DNA polymerase III holoenzyme which synthesizes a continuous strand.. It catalyses the reaction ATP + H2O = ADP + phosphate + H(+). Functionally, ATP-dependent 5'-3' DNA helicase. Component of the general transcription and DNA repair factor IIH (TFIIH) core complex which is involved in general and transcription-coupled nucleotide excision repair (NER) of damaged DNA. When complexed to CDK-activating kinase (CAK), involved in transcription by RNA polymerase II. In NER, TFIIH acts by opening DNA around the lesion to allow the excision of the damaged oligonucleotide and its replacement by a new DNA fragment. The ATP-dependent helicase activity of XPD/ERCC2 is required for DNA opening. In transcription, TFIIH has an essential role in transcription initiation. When the pre-initiation complex (PIC) has been established, TFIIH is required for promoter opening and promoter escape. Phosphorylation of the C-terminal tail (CTD) of the largest subunit of RNA polymerase II by the kinase module CAK controls the initiation of transcription. XPD/ERCC2 acts by forming a bridge between CAK and the core-TFIIH complex. Involved in the regulation of vitamin-D receptor activity. As part of the mitotic spindle-associated MMXD complex it plays a role in chromosome segregation. Might have a role in aging process and could play a causative role in the generation of skin cancers. The polypeptide is General transcription and DNA repair factor IIH helicase subunit XPD (Cricetulus griseus (Chinese hamster)).